A 287-amino-acid polypeptide reads, in one-letter code: Co-chaperone protein DjlA (287 aa).

Over 1 to 6 the chain is Periplasmic; the sequence is MNFIGK. The chain crosses the membrane as a helical span at residues 7 to 30; the sequence is FLGLIIGWKLGGFFGAICGVILGH. Topologically, residues 31 to 287 are cytoplasmic; the sequence is LGDKKLYELG…DLICKTKGWK (257 aa). In terms of domain architecture, J spans 221-287; sequence DAYKVLGVSA…DLICKTKGWK (67 aa).

As to quaternary structure, homodimer.

The protein localises to the cell inner membrane. In terms of biological role, regulatory DnaK co-chaperone. Direct interaction between DnaK and DjlA is needed for the induction of the wcaABCDE operon, involved in the synthesis of a colanic acid polysaccharide capsule, possibly through activation of the RcsB/RcsC phosphotransfer signaling pathway. The colanic acid capsule may help the bacterium survive conditions outside the host. This Pasteurella multocida (strain Pm70) protein is Co-chaperone protein DjlA.